The following is a 202-amino-acid chain: Ribosome maturation factor RimM (202 aa).

Residues 121-202 form the PRC barrel domain; it reads KDEYYWVDLI…CITVDWQPDY (82 aa).

It belongs to the RimM family. Binds ribosomal protein uS19.

The protein localises to the cytoplasm. Its function is as follows. An accessory protein needed during the final step in the assembly of 30S ribosomal subunit, possibly for assembly of the head region. Essential for efficient processing of 16S rRNA. May be needed both before and after RbfA during the maturation of 16S rRNA. It has affinity for free ribosomal 30S subunits but not for 70S ribosomes. The chain is Ribosome maturation factor RimM from Polaromonas sp. (strain JS666 / ATCC BAA-500).